A 316-amino-acid chain; its full sequence is Aspartate carbamoyltransferase catalytic subunit (316 aa).

Residues arginine 58 and threonine 59 each contribute to the carbamoyl phosphate site. Lysine 86 serves as a coordination point for L-aspartate. Positions 108, 136, and 139 each coordinate carbamoyl phosphate. Residues arginine 169 and arginine 223 each contribute to the L-aspartate site. Positions 264 and 265 each coordinate carbamoyl phosphate.

The protein belongs to the aspartate/ornithine carbamoyltransferase superfamily. ATCase family. In terms of assembly, heterododecamer (2C3:3R2) of six catalytic PyrB chains organized as two trimers (C3), and six regulatory PyrI chains organized as three dimers (R2).

It carries out the reaction carbamoyl phosphate + L-aspartate = N-carbamoyl-L-aspartate + phosphate + H(+). The protein operates within pyrimidine metabolism; UMP biosynthesis via de novo pathway; (S)-dihydroorotate from bicarbonate: step 2/3. Functionally, catalyzes the condensation of carbamoyl phosphate and aspartate to form carbamoyl aspartate and inorganic phosphate, the committed step in the de novo pyrimidine nucleotide biosynthesis pathway. This chain is Aspartate carbamoyltransferase catalytic subunit, found in Dinoroseobacter shibae (strain DSM 16493 / NCIMB 14021 / DFL 12).